Reading from the N-terminus, the 213-residue chain is Kynurenine formamidase (213 aa).

Trp18 contributes to the substrate binding site. The Zn(2+) site is built by His48, His52, and Asp54. His58 serves as the catalytic Proton donor/acceptor. The Zn(2+) site is built by His160 and Glu172.

Belongs to the Cyclase 1 superfamily. KynB family. Homodimer. The cofactor is Zn(2+).

The enzyme catalyses N-formyl-L-kynurenine + H2O = L-kynurenine + formate + H(+). The protein operates within amino-acid degradation; L-tryptophan degradation via kynurenine pathway; L-kynurenine from L-tryptophan: step 2/2. Functionally, catalyzes the hydrolysis of N-formyl-L-kynurenine to L-kynurenine, the second step in the kynurenine pathway of tryptophan degradation. The polypeptide is Kynurenine formamidase (Burkholderia pseudomallei (strain 1710b)).